The primary structure comprises 527 residues: Thymidine kinase (527 aa).

Residues 1-57 form a disordered region; sequence MTGRGQPPKKNDTYDYPRKQPPKNGSYDNYDYPTSTKTRSTNKQRKDSNYPPRETIF. Residues 9 to 18 show a composition bias toward basic and acidic residues; it reads KKNDTYDYPR. A compositionally biased stretch (polar residues) spans 32 to 41; the sequence is YPTSTKTRST. Residue 216 to 223 coordinates ATP; sequence GSIGVGKT. E243 (proton acceptor) is an active-site residue. The substrate site is built by Y260 and Q281. R368 is a binding site for ATP. R374 serves as a coordination point for substrate.

The protein belongs to the herpesviridae thymidine kinase family. As to quaternary structure, homodimer.

It carries out the reaction thymidine + ATP = dTMP + ADP + H(+). In terms of biological role, catalyzes the transfer of the gamma-phospho group of ATP to thymidine to generate dTMP in the salvage pathway of pyrimidine synthesis. The dTMP serves as a substrate for DNA polymerase during viral DNA replication. Allows the virus to be reactivated and to grow in non-proliferative cells lacking a high concentration of phosphorylated nucleic acid precursors. This Saimiriine herpesvirus 2 (strain 11) (SaHV-2) protein is Thymidine kinase.